The primary structure comprises 327 residues: Sphingomyelin synthase-related 2 (327 aa).

5 helical membrane-spanning segments follow: residues 54-74, 99-119, 131-151, 192-212, and 220-240; these read LLAT…LAWV, AIRI…LVMF, VFFC…IFQV, LCGD…FLVF, and LQPL…SILL. H201 is a catalytic residue. The Cytoplasmic portion of the chain corresponds to 241–327; the sequence is ARKHYMIDIV…TLKKSRRSFE (87 aa). Active-site residues include H244 and D248.

The protein belongs to the sphingomyelin synthase family.

It is found in the membrane. This Caenorhabditis elegans protein is Sphingomyelin synthase-related 2.